Reading from the N-terminus, the 615-residue chain is 1-deoxy-D-xylulose-5-phosphate synthase (615 aa).

Residues His-72 and 113–115 (GHA) contribute to the thiamine diphosphate site. Asp-144 serves as a coordination point for Mg(2+). Residues 145–146 (GA), Asn-173, Tyr-281, and Glu-360 contribute to the thiamine diphosphate site. Asn-173 contributes to the Mg(2+) binding site.

Belongs to the transketolase family. DXPS subfamily. In terms of assembly, homodimer. It depends on Mg(2+) as a cofactor. Requires thiamine diphosphate as cofactor.

The catalysed reaction is D-glyceraldehyde 3-phosphate + pyruvate + H(+) = 1-deoxy-D-xylulose 5-phosphate + CO2. It participates in metabolic intermediate biosynthesis; 1-deoxy-D-xylulose 5-phosphate biosynthesis; 1-deoxy-D-xylulose 5-phosphate from D-glyceraldehyde 3-phosphate and pyruvate: step 1/1. Catalyzes the acyloin condensation reaction between C atoms 2 and 3 of pyruvate and glyceraldehyde 3-phosphate to yield 1-deoxy-D-xylulose-5-phosphate (DXP). In Thermus thermophilus (strain ATCC BAA-163 / DSM 7039 / HB27), this protein is 1-deoxy-D-xylulose-5-phosphate synthase.